Here is a 461-residue protein sequence, read N- to C-terminus: Protein DVR-1 homolog (461 aa).

The first 30 residues, 1–30 (MEYSRKTYLDLNIMAKYILILSLFFGPGLS), serve as a signal peptide directing secretion. Residues 31-338 (WDVFYSGDED…QKKGGKRPRK (308 aa)) constitute a propeptide that is removed on maturation. A glycan (N-linked (GlcNAc...) asparagine) is linked at N149. Positions 317 to 351 (SHLRRNRRAATRQKKGGKRPRKPDTDNDIASRDSA) are disordered. Positions 318–337 (HLRRNRRAATRQKKGGKRPR) are enriched in basic residues. Residues 338–347 (KPDTDNDIAS) are compositionally biased toward basic and acidic residues. Cystine bridges form between C360/C426, C389/C458, and C393/C460. N-linked (GlcNAc...) asparagine glycosylation is present at N402.

This sequence belongs to the TGF-beta family. In terms of assembly, homodimer; disulfide-linked.

The protein resides in the secreted. The protein is Protein DVR-1 homolog (DVR1) of Strongylocentrotus purpuratus (Purple sea urchin).